We begin with the raw amino-acid sequence, 389 residues long: Phosphoglycerate kinase (389 aa).

Substrate-binding positions include 21-23 (DLN), Arg36, 59-62 (HLGR), Arg112, and Arg145. ATP-binding positions include Lys196, Glu313, and 342-345 (GGDT).

It belongs to the phosphoglycerate kinase family. As to quaternary structure, monomer.

It is found in the cytoplasm. It catalyses the reaction (2R)-3-phosphoglycerate + ATP = (2R)-3-phospho-glyceroyl phosphate + ADP. Its pathway is carbohydrate degradation; glycolysis; pyruvate from D-glyceraldehyde 3-phosphate: step 2/5. The protein is Phosphoglycerate kinase of Mannheimia succiniciproducens (strain KCTC 0769BP / MBEL55E).